The sequence spans 647 residues: MEDNTPRQRDPISLTSVANGLENMGAELLESLEEGRAPGSDSSPAEVGGGWSKAGPEHLGRRSLQPALRVRRFCREHTQLFRWICTGLLCTAFAAFLLIACLLDFQRALALFVLFCVVLFFLAHSLLKRLLGPKLLRCVKPLRHPCLNLWFKRGLALAAFLGLVLWLVLDTAQRPEQLVSFGGICVFILLLFAGSKHHRAVSWRAVSWGLGLQFALGLFVIRTEPGFIAFQWLGDQIQIFLSYTEAGSSFVFGEALVKDVFAFQVLPIIVFFSCAMSVLYYVGLMQWVILKISWLMQATMGTTATETLSVAGNIFVSQTEAPLLIRPYLADMTLSEIHVVMTGGYATIAGSLLGAYISFGIDAASLIAASVMAAPCALALSKLVYPEVEESKFKREEGVKLTYGDAQNLLEAASSGAAMSVRVVTNIAANLIAFLAVLAFINAALSWLGDMVDVQGLSFQLICSYVLRPVAFLMGVAWEDCPVVAELLGMKLFLNEFVAYQELSGYKQRRLAGAEEWVGSRKQWISVRAEILTTYALCGFANFSSIGIMLGGLTSMVPQRKGDFSQIVLRALCTGACVSLVNACVAGILYVPRGAEVDCVSFLNTTLSSSSFEVYQCCRQFFQSTSLEFSPEALDNCCRFYNHTICV.

Residues 1–79 (MEDNTPRQRD…VRRFCREHTQ (79 aa)) lie on the Cytoplasmic side of the membrane. Residues 34–58 (EGRAPGSDSSPAEVGGGWSKAGPEH) are disordered. The helical transmembrane segment at 80-103 (LFRWICTGLLCTAFAAFLLIACLL) threads the bilayer. At 104–108 (DFQRA) the chain is on the extracellular side. Residues 109 to 127 (LALFVLFCVVLFFLAHSLL) form a helical membrane-spanning segment. Residues 128–146 (KRLLGPKLLRCVKPLRHPC) are Cytoplasmic-facing. Residues 147–166 (LNLWFKRGLALAAFLGLVLW) traverse the membrane as a helical segment. Topologically, residues 167-177 (LVLDTAQRPEQ) are extracellular. Residues 178–194 (LVSFGGICVFILLLFAG) form a helical membrane-spanning segment. Residues 195–200 (SKHHRA) lie on the Cytoplasmic side of the membrane. A helical membrane pass occupies residues 201-221 (VSWRAVSWGLGLQFALGLFVI). Residues 222–260 (RTEPGFIAFQWLGDQIQIFLSYTEAGSSFVFGEALVKDV) lie on the Extracellular side of the membrane. Residues 261 to 282 (FAFQVLPIIVFFSCAMSVLYYV) traverse the membrane as a helical segment. Over 283–293 (GLMQWVILKIS) the chain is Cytoplasmic. A helical membrane pass occupies residues 294–317 (WLMQATMGTTATETLSVAGNIFVS). Over 318-336 (QTEAPLLIRPYLADMTLSE) the chain is Extracellular. A helical membrane pass occupies residues 337–359 (IHVVMTGGYATIAGSLLGAYISF). The Cytoplasmic portion of the chain corresponds to 360-365 (GIDAAS). Residues 366-385 (LIAASVMAAPCALALSKLVY) traverse the membrane as a helical segment. The Extracellular portion of the chain corresponds to 386–422 (PEVEESKFKREEGVKLTYGDAQNLLEAASSGAAMSVR). The helical transmembrane segment at 423–445 (VVTNIAANLIAFLAVLAFINAAL) threads the bilayer. Topologically, residues 446–456 (SWLGDMVDVQG) are cytoplasmic. Residues 457–478 (LSFQLICSYVLRPVAFLMGVAW) form a helical membrane-spanning segment. Residues 479 to 533 (EDCPVVAELLGMKLFLNEFVAYQELSGYKQRRLAGAEEWVGSRKQWISVRAEILT) lie on the Extracellular side of the membrane. A helical membrane pass occupies residues 534-557 (TYALCGFANFSSIGIMLGGLTSMV). Over 558-568 (PQRKGDFSQIV) the chain is Cytoplasmic. Residues 569 to 591 (LRALCTGACVSLVNACVAGILYV) form a helical membrane-spanning segment. Over 592 to 647 (PRGAEVDCVSFLNTTLSSSSFEVYQCCRQFFQSTSLEFSPEALDNCCRFYNHTICV) the chain is Extracellular. N-linked (GlcNAc...) asparagine glycans are attached at residues N604 and N642.

Belongs to the concentrative nucleoside transporter (CNT) (TC 2.A.41) family. Post-translationally, N-glycosylated. N-glycosylation is required for localization to the plasma membrane and the transporter activity.

Its subcellular location is the cell membrane. It localises to the apical cell membrane. It catalyses the reaction uridine(out) + Na(+)(out) = uridine(in) + Na(+)(in). The catalysed reaction is thymidine(out) + Na(+)(out) = thymidine(in) + Na(+)(in). The enzyme catalyses cytidine(out) + Na(+)(out) = cytidine(in) + Na(+)(in). It carries out the reaction adenosine(out) + Na(+)(out) = adenosine(in) + Na(+)(in). With respect to regulation, due to its high apparent affinity but slow transport, adenosine could act as a negative regulator of pyrimidine transport under some conditions. Its function is as follows. Sodium and pyrimidine nucleoside symporter of the plasma membrane that imports uridine, thymidine and cytidine into cells by coupling their transport to the transmembrane sodium electrochemical gradient. Also transports adenosine, an atypical substrate transported with high apparent affinity, but low maximum velocity. Therefore, exhibits the transport characteristics of the nucleoside transport system cit or N2 subtype (N2/cit). Involved in renal nucleoside (re)absorption. In Sus scrofa (Pig), this protein is Sodium/nucleoside cotransporter 1 (SLC28A1).